Consider the following 222-residue polypeptide: Putative N-acetylmannosamine-6-phosphate 2-epimerase (222 aa).

It belongs to the NanE family.

It catalyses the reaction an N-acyl-D-glucosamine 6-phosphate = an N-acyl-D-mannosamine 6-phosphate. It functions in the pathway amino-sugar metabolism; N-acetylneuraminate degradation; D-fructose 6-phosphate from N-acetylneuraminate: step 3/5. Its function is as follows. Converts N-acetylmannosamine-6-phosphate (ManNAc-6-P) to N-acetylglucosamine-6-phosphate (GlcNAc-6-P). In Staphylococcus saprophyticus subsp. saprophyticus (strain ATCC 15305 / DSM 20229 / NCIMB 8711 / NCTC 7292 / S-41), this protein is Putative N-acetylmannosamine-6-phosphate 2-epimerase.